The sequence spans 261 residues: DNA repair protein RecO (261 aa).

Belongs to the RecO family.

Its function is as follows. Involved in DNA repair and RecF pathway recombination. In Chlorobium phaeobacteroides (strain DSM 266 / SMG 266 / 2430), this protein is DNA repair protein RecO.